We begin with the raw amino-acid sequence, 675 residues long: MTAPGFVEFPDSPFHLYQPYPPAGDQPGAIDALTEGVSDGLMFQTLLGVTGSGKTYTMANMIARLGRPALVLAPNKTLAAQLYAEMREFFPRNAVEYFVSYYDYYQPEAYVPTRDLFIEKDSSINEHIEQMRLSATKSLLERRDTVIVGTVSCIYGIGNPGDYHAMVLILRTGDRISRREVLARLVAMQYTRNDADFTRGVFRVRGETIDIFPAESPELALRLTLFDDEIESLELFDPLTGRVRQKLPRFTVYPGSHYVTPRETVLRAIETIKEELRERLAQLIADGKLVEAQRLEQRTRFDLEMLQELGFCKGIENYSRHLSGAAPGEPPPTLIDYLPADALMFIDESHVTIGQLGGMYRGDRSRKETLVQYGFRLPSALDNRPLRLEEFEARMRQCVFVSATPAAYEQEHADNVVEQVVRPTGLVDPIVEVRPAHTQVDDLLGEIHKRAALQERVLVTTLTKRMAEDLTDFLSEHGVRVRYLHSDIDTVERVEIIRDLRLGVFDVLVGINLLREGLDIPEVSLVAILDADKEGFLRSERSLIQTIGRAARNLNGRAILYADRITDSMRRAIDETERRRAKQIQHNTDHGITARGVSKAVRELIDGVVAPAGHDALESAVPAEVLTDEKAMAREIRRLEKLMMDHARNLEFEQAAAARDALNALKSRLLLDGVG.

Residues 35 to 422 enclose the Helicase ATP-binding domain; that stretch reads EGVSDGLMFQ…ADNVVEQVVR (388 aa). 48-55 is a binding site for ATP; the sequence is GVTGSGKT. The Beta-hairpin motif lies at 101-124; sequence YYDYYQPEAYVPTRDLFIEKDSSI. The region spanning 439 to 605 is the Helicase C-terminal domain; that stretch reads QVDDLLGEIH…GVSKAVRELI (167 aa). Positions 633–668 constitute a UVR domain; it reads AREIRRLEKLMMDHARNLEFEQAAAARDALNALKSR.

It belongs to the UvrB family. In terms of assembly, forms a heterotetramer with UvrA during the search for lesions. Interacts with UvrC in an incision complex.

It localises to the cytoplasm. Its function is as follows. The UvrABC repair system catalyzes the recognition and processing of DNA lesions. A damage recognition complex composed of 2 UvrA and 2 UvrB subunits scans DNA for abnormalities. Upon binding of the UvrA(2)B(2) complex to a putative damaged site, the DNA wraps around one UvrB monomer. DNA wrap is dependent on ATP binding by UvrB and probably causes local melting of the DNA helix, facilitating insertion of UvrB beta-hairpin between the DNA strands. Then UvrB probes one DNA strand for the presence of a lesion. If a lesion is found the UvrA subunits dissociate and the UvrB-DNA preincision complex is formed. This complex is subsequently bound by UvrC and the second UvrB is released. If no lesion is found, the DNA wraps around the other UvrB subunit that will check the other stand for damage. This is UvrABC system protein B from Bordetella bronchiseptica (strain ATCC BAA-588 / NCTC 13252 / RB50) (Alcaligenes bronchisepticus).